A 408-amino-acid chain; its full sequence is MWAFPELPLPLLVNLFGSLLGFVATVTLIPAFRSHFIAARLCGQDLNKLSRQQIPESQGVICGAVFLIILFCFIPFPFLNCFVEEQCKAFPHHEFVALIGALLAICCMIFLGFADDVLNLRWRHKLLLPTAASLPLLMVYFTNFGNTTIVVPKPFRWILGLHLDLGILYYVYMGLLAVFCTNAINILAGINGLEAGQSLVISASIIVFNLVELEGDYRDDHVFSLYFMIPFFFTTLGLLYHNWYPSQVFVGDTFCYFAGMTFAVVGILGHFSKTMLLFFIPQVFNFLYSLPQLLHAIPCPRHRIPRLNPKTGKLEMSYSKFKTKNLSFLGTFILKVAERLQLVTVHRGESEDGAFTECNNMTLINLLLKIFGPIHERNLTLLLLLLQILSSAVTFSIRYQLVRLFYDV.

Residues 1–10 (MWAFPELPLP) are Lumenal-facing. A helical transmembrane segment spans residues 11–38 (LLVNLFGSLLGFVATVTLIPAFRSHFIA). Topologically, residues 39 to 58 (ARLCGQDLNKLSRQQIPESQ) are cytoplasmic. Residues 44-46 (QDL) and E56 each bind UDP-N-acetyl-alpha-D-glucosamine. A helical membrane pass occupies residues 59–78 (GVICGAVFLIILFCFIPFPF). At 79 to 91 (LNCFVEEQCKAFP) the chain is on the lumenal side. Residues 92 to 118 (HHEFVALIGALLAICCMIFLGFADDVL) form a helical membrane-spanning segment. Topologically, residues 119–121 (NLR) are cytoplasmic. The chain crosses the membrane as a helical span at residues 122-143 (WRHKLLLPTAASLPLLMVYFTN). K125 contributes to the dolichyl phosphate binding site. Over 144 to 166 (FGNTTIVVPKPFRWILGLHLDLG) the chain is Lumenal. A glycan (N-linked (GlcNAc...) asparagine) is linked at N146. A helical transmembrane segment spans residues 167–186 (ILYYVYMGLLAVFCTNAINI). Dolichyl phosphate is bound at residue 178–186 (VFCTNAINI). N185 contacts Mg(2+). Residues 187 to 192 (LAGING) lie on the Cytoplasmic side of the membrane. UDP-N-acetyl-alpha-D-glucosamine is bound at residue N191. Residues 193-213 (LEAGQSLVISASIIVFNLVEL) traverse the membrane as a helical segment. The Lumenal portion of the chain corresponds to 214 to 218 (EGDYR). Residues 219 to 242 (DDHVFSLYFMIPFFFTTLGLLYHN) form a helical membrane-spanning segment. The Cytoplasmic segment spans residues 243–250 (WYPSQVFV). A helical membrane pass occupies residues 251–269 (GDTFCYFAGMTFAVVGILG). D252 lines the Mg(2+) pocket. Residues 270-271 (HF) lie on the Lumenal side of the membrane. The chain crosses the membrane as a helical span at residues 272–293 (SKTMLLFFIPQVFNFLYSLPQL). The Cytoplasmic portion of the chain corresponds to 294–375 (LHAIPCPRHR…LLLKIFGPIH (82 aa)). 301-303 (RHR) is a UDP-N-acetyl-alpha-D-glucosamine binding site. A helical transmembrane segment spans residues 376–400 (ERNLTLLLLLLQILSSAVTFSIRYQ). Residues 401-408 (LVRLFYDV) lie on the Lumenal side of the membrane.

It belongs to the glycosyltransferase 4 family. As to quaternary structure, homodimer. Mg(2+) is required as a cofactor.

The protein localises to the endoplasmic reticulum membrane. The catalysed reaction is a di-trans,poly-cis-dolichyl phosphate + UDP-N-acetyl-alpha-D-glucosamine = an N-acetyl-alpha-D-glucosaminyl-diphospho-di-trans,poly-cis-dolichol + UMP. Its pathway is protein modification; protein glycosylation. Inhibited by natural nucleoside antibiotic tunicamycin, which acts as a structural analog and competitor of UDP-GlcNAc. In terms of biological role, UDP-N-acetylglucosamine--dolichyl-phosphate N-acetylglucosaminephosphotransferase that operates in the biosynthetic pathway of dolichol-linked oligosaccharides, the glycan precursors employed in protein asparagine (N)-glycosylation. The assembly of dolichol-linked oligosaccharides begins on the cytosolic side of the endoplasmic reticulum membrane and finishes in its lumen. The sequential addition of sugars to dolichol pyrophosphate produces dolichol-linked oligosaccharides containing fourteen sugars, including two GlcNAcs, nine mannoses and three glucoses. Once assembled, the oligosaccharide is transferred from the lipid to nascent proteins by oligosaccharyltransferases. Catalyzes the initial step of dolichol-linked oligosaccharide biosynthesis, transfering GlcNAc-1-P from cytosolic UDP-GlcNAc onto the carrier lipid dolichyl phosphate (P-dolichol), yielding GlcNAc-P-P-dolichol embedded in the cytoplasmic leaflet of the endoplasmic reticulum membrane. This is UDP-N-acetylglucosamine--dolichyl-phosphate N-acetylglucosaminephosphotransferase (DPAGT1) from Cricetulus griseus (Chinese hamster).